The following is a 227-amino-acid chain: Enolase-phosphatase E1 (227 aa).

The protein belongs to the HAD-like hydrolase superfamily. MasA/MtnC family. In terms of assembly, monomer. The cofactor is Mg(2+).

The enzyme catalyses 5-methylsulfanyl-2,3-dioxopentyl phosphate + H2O = 1,2-dihydroxy-5-(methylsulfanyl)pent-1-en-3-one + phosphate. It functions in the pathway amino-acid biosynthesis; L-methionine biosynthesis via salvage pathway; L-methionine from S-methyl-5-thio-alpha-D-ribose 1-phosphate: step 3/6. The protein operates within amino-acid biosynthesis; L-methionine biosynthesis via salvage pathway; L-methionine from S-methyl-5-thio-alpha-D-ribose 1-phosphate: step 4/6. Bifunctional enzyme that catalyzes the enolization of 2,3-diketo-5-methylthiopentyl-1-phosphate (DK-MTP-1-P) into the intermediate 2-hydroxy-3-keto-5-methylthiopentenyl-1-phosphate (HK-MTPenyl-1-P), which is then dephosphorylated to form the acireductone 1,2-dihydroxy-3-keto-5-methylthiopentene (DHK-MTPene). In Pseudomonas savastanoi pv. phaseolicola (strain 1448A / Race 6) (Pseudomonas syringae pv. phaseolicola (strain 1448A / Race 6)), this protein is Enolase-phosphatase E1.